Reading from the N-terminus, the 431-residue chain is Adenylosuccinate synthetase (431 aa).

Residues 12-18 (GDEGKGK) and 40-42 (GHT) each bind GTP. Asp13 (proton acceptor) is an active-site residue. Residues Asp13 and Gly40 each contribute to the Mg(2+) site. Residues 13–16 (DEGK), 38–41 (NAGH), Thr130, Arg144, Gln224, Thr239, and Arg303 contribute to the IMP site. His41 (proton donor) is an active-site residue. 299–305 (STTGRPR) lines the substrate pocket. Residues Arg305, 331–333 (KAD), and 413–415 (SIG) each bind GTP.

Belongs to the adenylosuccinate synthetase family. As to quaternary structure, homodimer. The cofactor is Mg(2+).

It is found in the cytoplasm. The enzyme catalyses IMP + L-aspartate + GTP = N(6)-(1,2-dicarboxyethyl)-AMP + GDP + phosphate + 2 H(+). It participates in purine metabolism; AMP biosynthesis via de novo pathway; AMP from IMP: step 1/2. Functionally, plays an important role in the de novo pathway of purine nucleotide biosynthesis. Catalyzes the first committed step in the biosynthesis of AMP from IMP. The sequence is that of Adenylosuccinate synthetase from Cytophaga hutchinsonii (strain ATCC 33406 / DSM 1761 / CIP 103989 / NBRC 15051 / NCIMB 9469 / D465).